The sequence spans 436 residues: Adenosylhomocysteinase (436 aa).

Substrate is bound by residues T62, D136, and E161. Position 162–164 (162–164 (TTT)) interacts with NAD(+). K191 and D195 together coordinate substrate. NAD(+) is bound by residues N196, 225–230 (GFGDVG), E248, N283, 304–306 (IGH), and N352.

This sequence belongs to the adenosylhomocysteinase family. It depends on NAD(+) as a cofactor.

The protein localises to the cytoplasm. It carries out the reaction S-adenosyl-L-homocysteine + H2O = L-homocysteine + adenosine. It participates in amino-acid biosynthesis; L-homocysteine biosynthesis; L-homocysteine from S-adenosyl-L-homocysteine: step 1/1. In terms of biological role, may play a key role in the regulation of the intracellular concentration of adenosylhomocysteine. This Leptospira interrogans serogroup Icterohaemorrhagiae serovar copenhageni (strain Fiocruz L1-130) protein is Adenosylhomocysteinase.